The primary structure comprises 418 residues: Coenzyme A biosynthesis bifunctional protein CoaBC (418 aa).

Residues 1-195 (MVDHKRIPKQ…ALPYDLAGRK (195 aa)) are phosphopantothenoylcysteine decarboxylase. Positions 196–418 (LLVTAGGTRE…IVTFLAGCSS (223 aa)) are phosphopantothenate--cysteine ligase. Aspartate 285, lysine 295, phenylalanine 336, lysine 354, and lysine 358 together coordinate CTP.

In the N-terminal section; belongs to the HFCD (homo-oligomeric flavin containing Cys decarboxylase) superfamily. This sequence in the C-terminal section; belongs to the PPC synthetase family. Mg(2+) is required as a cofactor. It depends on FMN as a cofactor.

It catalyses the reaction N-[(R)-4-phosphopantothenoyl]-L-cysteine + H(+) = (R)-4'-phosphopantetheine + CO2. The catalysed reaction is (R)-4'-phosphopantothenate + L-cysteine + CTP = N-[(R)-4-phosphopantothenoyl]-L-cysteine + CMP + diphosphate + H(+). Its pathway is cofactor biosynthesis; coenzyme A biosynthesis; CoA from (R)-pantothenate: step 2/5. It participates in cofactor biosynthesis; coenzyme A biosynthesis; CoA from (R)-pantothenate: step 3/5. Functionally, catalyzes two sequential steps in the biosynthesis of coenzyme A. In the first step cysteine is conjugated to 4'-phosphopantothenate to form 4-phosphopantothenoylcysteine. In the second step the latter compound is decarboxylated to form 4'-phosphopantotheine. This is Coenzyme A biosynthesis bifunctional protein CoaBC from Mycobacterium bovis (strain ATCC BAA-935 / AF2122/97).